Here is a 115-residue protein sequence, read N- to C-terminus: Large ribosomal subunit protein bL20 (115 aa).

It belongs to the bacterial ribosomal protein bL20 family.

Binds directly to 23S ribosomal RNA and is necessary for the in vitro assembly process of the 50S ribosomal subunit. It is not involved in the protein synthesizing functions of that subunit. The protein is Large ribosomal subunit protein bL20 of Synechococcus sp. (strain RCC307).